A 216-amino-acid polypeptide reads, in one-letter code: Sperm microtubule inner protein 8 (216 aa).

Microtubule inner protein component of sperm flagellar doublet microtubules. In terms of tissue distribution, expressed in testis, prostate and placenta.

It is found in the cytoplasm. Its subcellular location is the cytoskeleton. The protein localises to the flagellum axoneme. Microtubule inner protein (MIP) part of the dynein-decorated doublet microtubules (DMTs) in flagellum axoneme. May serve to reinforce and thus stabilize the microtubule structure in the sperm flagella. The sequence is that of Sperm microtubule inner protein 8 from Homo sapiens (Human).